Reading from the N-terminus, the 234-residue chain is Ribitol-5-phosphate cytidylyltransferase (234 aa).

CTP-binding positions include Leu7 to Gly10 and Gly79 to Ser85.

This sequence belongs to the IspD/TarI cytidylyltransferase family. TarI subfamily.

It catalyses the reaction D-ribitol 5-phosphate + CTP + H(+) = CDP-L-ribitol + diphosphate. The protein operates within cell wall biogenesis; poly(ribitol phosphate) teichoic acid biosynthesis. Catalyzes the transfer of the cytidylyl group of CTP to D-ribitol 5-phosphate. The sequence is that of Ribitol-5-phosphate cytidylyltransferase from Lacticaseibacillus paracasei (strain ATCC 334 / BCRC 17002 / CCUG 31169 / CIP 107868 / KCTC 3260 / NRRL B-441) (Lactobacillus paracasei).